Consider the following 498-residue polypeptide: L-xylulose/3-keto-L-gulonate kinase (498 aa).

Belongs to the FGGY kinase family. Homodimer.

It carries out the reaction L-xylulose + ATP = L-xylulose 5-phosphate + ADP + H(+). The catalysed reaction is 3-dehydro-L-gulonate + ATP = 3-dehydro-L-gulonate 6-phosphate + ADP + H(+). Functionally, catalyzes the phosphorylation of L-xylulose and 3-keto-L-gulonate. Is involved in L-lyxose utilization via xylulose, and may also be involved in the utilization of 2,3-diketo-L-gulonate. This Escherichia coli (strain K12) protein is L-xylulose/3-keto-L-gulonate kinase (lyx).